Consider the following 364-residue polypeptide: Medium-wave-sensitive opsin 1 (364 aa).

Residues 1 to 52 lie on the Extracellular side of the membrane; the sequence is MAQRWGPHALSGVQAQDAYEDSTQASLFTYTNSNNTRGPFEGPNYHIAPRWV. A required for 11-cis-retinal regeneration region spans residues 17-43; that stretch reads DAYEDSTQASLFTYTNSNNTRGPFEGP. N-linked (GlcNAc...) asparagine glycosylation occurs at N34. A helical membrane pass occupies residues 53 to 77; that stretch reads YHLTSAWMTIVVIASIFTNGLVLVA. Topologically, residues 78–89 are cytoplasmic; sequence TMRFKKLRHPLN. A helical transmembrane segment spans residues 90–115; sequence WILVNLAVADLAETVIASTISVVNQV. The Extracellular portion of the chain corresponds to 116-129; it reads YGYFVLGHPLCVVE. A disulfide bridge links C126 with C203. Residues 130–149 form a helical membrane-spanning segment; the sequence is GYTVSLCGITGLWSLAIISW. Residues 150–168 lie on the Cytoplasmic side of the membrane; the sequence is ERWLVVCKPFGNVRFDAKL. The helical transmembrane segment at 169–192 threads the bilayer; it reads AIVGIVFSWVWSAVWTAPPIFGWS. Residues 193–218 are Extracellular-facing; it reads RYWPYGLKTSCGPDVFSGTSYPGVQS. A helical transmembrane segment spans residues 219 to 246; that stretch reads YMMVLMVTCCITPLSIIVLCYLHVWLAI. The Cytoplasmic portion of the chain corresponds to 247-268; that stretch reads RAVAKQQKESESTQKAEKEVTR. A helical membrane pass occupies residues 269–292; that stretch reads MVVVMVLAYCLCWGPYAFFACFAT. Topologically, residues 293–300 are extracellular; sequence ANPGYSFH. The chain crosses the membrane as a helical span at residues 301–325; that stretch reads PLVAALPAYFAKSATIYNPIIYVFM. The residue at position 312 (K312) is an N6-(retinylidene)lysine. Residues 326–364 lie on the Cytoplasmic side of the membrane; the sequence is NRQFRNCILQLFGKKVEDSSELSSTSRTEASSVSSVSPA.

Belongs to the G-protein coupled receptor 1 family. Opsin subfamily. In terms of assembly, monomer. Homodimer. Homotetramer. O-glycosylated. Post-translationally, phosphorylated on some or all of the serine and threonine residues present in the C-terminal region. In terms of tissue distribution, expressed in cone photoreceptor cells.

The protein localises to the membrane. Functionally, visual pigments are the light-absorbing molecules that mediate vision. They consist of an apoprotein, opsin, covalently linked to cis-retinal. May increase spectral sensitivity in dim light. The chain is Medium-wave-sensitive opsin 1 (OPN1MW) from Cavia porcellus (Guinea pig).